Consider the following 301-residue polypeptide: 2-dehydropantoate 2-reductase (301 aa).

NADP(+) contacts are provided by residues 11–16 (GAGAMG), Asn-107, and Ala-133. Asn-107 is a substrate binding site. Lys-187 functions as the Proton donor in the catalytic mechanism. Positions 191, 195, 205, and 251 each coordinate substrate. Glu-263 lines the NADP(+) pocket.

It belongs to the ketopantoate reductase family.

It localises to the cytoplasm. It catalyses the reaction (R)-pantoate + NADP(+) = 2-dehydropantoate + NADPH + H(+). It participates in cofactor biosynthesis; (R)-pantothenate biosynthesis; (R)-pantoate from 3-methyl-2-oxobutanoate: step 2/2. Its function is as follows. Catalyzes the NADPH-dependent reduction of ketopantoate into pantoic acid. The chain is 2-dehydropantoate 2-reductase from Listeria innocua serovar 6a (strain ATCC BAA-680 / CLIP 11262).